A 334-amino-acid polypeptide reads, in one-letter code: Phosphoribosylformylglycinamidine cyclo-ligase (334 aa).

It belongs to the AIR synthase family.

The protein localises to the cytoplasm. The enzyme catalyses 2-formamido-N(1)-(5-O-phospho-beta-D-ribosyl)acetamidine + ATP = 5-amino-1-(5-phospho-beta-D-ribosyl)imidazole + ADP + phosphate + H(+). It participates in purine metabolism; IMP biosynthesis via de novo pathway; 5-amino-1-(5-phospho-D-ribosyl)imidazole from N(2)-formyl-N(1)-(5-phospho-D-ribosyl)glycinamide: step 2/2. This chain is Phosphoribosylformylglycinamidine cyclo-ligase, found in Pyrococcus furiosus (strain ATCC 43587 / DSM 3638 / JCM 8422 / Vc1).